A 308-amino-acid chain; its full sequence is Large ribosomal subunit protein mL38 (308 aa).

The N-terminal 17 residues, M1–A17, are a transit peptide targeting the mitochondrion.

Belongs to the phosphatidylethanolamine-binding protein family. Mitochondrion-specific ribosomal protein mL38 subfamily. In terms of assembly, component of the mitochondrial large ribosomal subunit (mt-LSU). Mature yeast 74S mitochondrial ribosomes consist of a small (37S) and a large (54S) subunit. The 37S small subunit contains a 15S ribosomal RNA (15S mt-rRNA) and at least 32 different proteins. The 54S large subunit contains a 21S rRNA (21S mt-rRNA) and at least 45 different proteins.

The protein resides in the mitochondrion. Functionally, component of the mitochondrial ribosome (mitoribosome), a dedicated translation machinery responsible for the synthesis of mitochondrial genome-encoded proteins, including at least some of the essential transmembrane subunits of the mitochondrial respiratory chain. The mitoribosomes are attached to the mitochondrial inner membrane and translation products are cotranslationally integrated into the membrane. The protein is Large ribosomal subunit protein mL38 (mrpl35) of Schizosaccharomyces pombe (strain 972 / ATCC 24843) (Fission yeast).